We begin with the raw amino-acid sequence, 224 residues long: Imidazoleglycerol-phosphate dehydratase (224 aa).

This sequence belongs to the imidazoleglycerol-phosphate dehydratase family.

The catalysed reaction is D-erythro-1-(imidazol-4-yl)glycerol 3-phosphate = 3-(imidazol-4-yl)-2-oxopropyl phosphate + H2O. The protein operates within amino-acid biosynthesis; L-histidine biosynthesis; L-histidine from 5-phospho-alpha-D-ribose 1-diphosphate: step 6/9. The chain is Imidazoleglycerol-phosphate dehydratase (HIS3) from Cyberlindnera jadinii (Torula yeast).